Reading from the N-terminus, the 244-residue chain is Troponin I, cardiac muscle (244 aa).

Positions 1–25 (MSDEEEVTYEEEEEEYVEEEEEEVV) are enriched in acidic residues. Residues 1-67 (MSDEEEVTYE…PQVKRKPKIS (67 aa)) form a disordered region. Position 2 is an N-acetylserine (Ser2). Residue Ser2 is modified to Phosphoserine; by CK2. The span at 27 to 42 (PEPPKPAPPPAAPPPL) shows a compositional bias: pro residues.

The protein belongs to the troponin I family. Binds to actin and tropomyosin. In terms of tissue distribution, heart.

Its function is as follows. Troponin I is the inhibitory subunit of troponin, the thin filament regulatory complex which confers calcium-sensitivity to striated muscle actomyosin ATPase activity. The polypeptide is Troponin I, cardiac muscle (tnni3) (Xenopus laevis (African clawed frog)).